The primary structure comprises 282 residues: HTH-type transcriptional activator RhaR (282 aa).

One can recognise an HTH araC/xylS-type domain in the interval 179–277 (DKLITALANS…GMTPSQWRHL (99 aa)). 2 consecutive DNA-binding regions (H-T-H motif) follow at residues 196–217 (DAFC…RAQT) and 244–267 (ISEI…TRET).

In terms of assembly, binds DNA as a dimer.

It localises to the cytoplasm. In terms of biological role, activates expression of the rhaSR operon in response to L-rhamnose. The polypeptide is HTH-type transcriptional activator RhaR (Salmonella typhimurium (strain LT2 / SGSC1412 / ATCC 700720)).